The sequence spans 441 residues: MSKVTPQPKIGFVSLGCPKNLVDSERILTELRTEGYDVVPSYDDADMVIVNTCGFIDSAVQESLEAIGEALNENGKVIVTGCLGAKEDQIREVHPKVLEITGPHSYEQVLEHVHHYVPKPKHNPFLSLVPEQGVKLTPRHYAYLKISEGCNHRCTFCIIPSMRGDLVSRPIGEVLSEAKRLVDAGVKEILVISQDTSAYGVDVKHRTGFHNGEPVKTSMVSLCEQLSKLGIWTRLHYVYPYPHVDDVIPLMAEGKILPYLDIPLQHASPRILKLMKRPGSVDRQLARIKQWREICPELTLRSTFIVGFPGETEEDFQMLLDFLKEARLDRVGCFKYSPVEGADANALPDQVPEEVKEERWNRFMQLQQQISAERLQEKVGREILVIIDEVDEEGAIGRSMADAPEIDGAVYLNGETNVKPGDILRVKVEHADEYDLWGSRV.

The MTTase N-terminal domain occupies 8-118; that stretch reads PKIGFVSLGC…VLEHVHHYVP (111 aa). [4Fe-4S] cluster-binding residues include cysteine 17, cysteine 53, cysteine 82, cysteine 150, cysteine 154, and cysteine 157. Positions 136–373 constitute a Radical SAM core domain; it reads LTPRHYAYLK…MQLQQQISAE (238 aa). The TRAM domain occupies 376 to 441; sequence QEKVGREILV…DEYDLWGSRV (66 aa).

This sequence belongs to the methylthiotransferase family. RimO subfamily. It depends on [4Fe-4S] cluster as a cofactor.

The protein resides in the cytoplasm. The catalysed reaction is L-aspartate(89)-[ribosomal protein uS12]-hydrogen + (sulfur carrier)-SH + AH2 + 2 S-adenosyl-L-methionine = 3-methylsulfanyl-L-aspartate(89)-[ribosomal protein uS12]-hydrogen + (sulfur carrier)-H + 5'-deoxyadenosine + L-methionine + A + S-adenosyl-L-homocysteine + 2 H(+). Functionally, catalyzes the methylthiolation of an aspartic acid residue of ribosomal protein uS12. In Escherichia coli (strain SMS-3-5 / SECEC), this protein is Ribosomal protein uS12 methylthiotransferase RimO.